Consider the following 607-residue polypeptide: Vacuolar fusion protein MON1 homolog (607 aa).

Residues 1-14 (MATSDSRSSPSSSD) are compositionally biased toward low complexity. 2 disordered regions span residues 1-173 (MATS…DDAS) and 463-486 (PIDR…DISV). Residues 21–55 (NPSSDPETNSERVQSQLESMNLSQPSEVSDGSHTE) are compositionally biased toward polar residues.

Belongs to the MON1/SAND family. Interacts with CCZ1A, CCZ1B and RABF2B. As to expression, widely expressed at stable levels.

It localises to the endosome. The protein resides in the prevacuolar compartment. Plays an important role in membrane trafficking through the secretory apparatus. In complex with CCZ1, acts as a guanine exchange factor (GEF) for RABG3F of the Rab7 protein family. Promotes the exchange of GDP to GTP, converting RABG3F from an inactive GDP-bound form into an active GTP-bound form. The RABG3F active form is involved in protein trafficking from prevacuolar compartments (PVCs) to vacuoles. May serve as a linker between Rab5 and Rab7 protein families in PVCs and mediate PVC maturation. This is Vacuolar fusion protein MON1 homolog from Arabidopsis thaliana (Mouse-ear cress).